We begin with the raw amino-acid sequence, 114 residues long: Large ribosomal subunit protein P2 (114 aa).

The segment covering 74–83 (AAAAGGGGGD) has biased composition (gly residues). The interval 74 to 114 (AAAAGGGGGDAPAAAAEEPKKEEKSEEESDEELGFSLFDDN) is disordered. Positions 98–114 (SEEESDEELGFSLFDDN) are enriched in acidic residues.

The protein belongs to the eukaryotic ribosomal protein P1/P2 family. As to quaternary structure, P1 and P2 exist as dimers at the large ribosomal subunit. Post-translationally, phosphorylated.

Plays an important role in the elongation step of protein synthesis. The chain is Large ribosomal subunit protein P2 from Parthenium argentatum (Guayule rubber plant).